The primary structure comprises 468 residues: Mitochondrial distribution and morphology protein 10 (468 aa).

The protein belongs to the MDM10 family. Component of the ER-mitochondria encounter structure (ERMES) or MDM complex, composed of MMM1, MDM10, MDM12 and MDM34. Associates with the mitochondrial outer membrane sorting assembly machinery SAM(core) complex.

It is found in the mitochondrion outer membrane. Component of the ERMES/MDM complex, which serves as a molecular tether to connect the endoplasmic reticulum and mitochondria. Components of this complex are involved in the control of mitochondrial shape and protein biogenesis and may function in phospholipid exchange. MDM10 is involved in the late assembly steps of the general translocase of the mitochondrial outer membrane (TOM complex). Functions in the TOM40-specific route of the assembly of outer membrane beta-barrel proteins, including the association of TOM40 with the receptor TOM22 and small TOM proteins. Can associate with the SAM(core) complex as well as the MDM12-MMM1 complex, both involved in late steps of the major beta-barrel assembly pathway, that is responsible for biogenesis of all outer membrane beta-barrel proteins. May act as a switch that shuttles between both complexes and channels precursor proteins into the TOM40-specific pathway. Plays a role in mitochondrial morphology and in the inheritance of mitochondria. This chain is Mitochondrial distribution and morphology protein 10, found in Blastomyces gilchristii (strain SLH14081) (Blastomyces dermatitidis).